A 598-amino-acid polypeptide reads, in one-letter code: Glutamyl-tRNA(Gln) amidotransferase subunit E (598 aa).

The protein belongs to the GatB/GatE family. GatE subfamily. Heterodimer of GatD and GatE.

It catalyses the reaction L-glutamyl-tRNA(Gln) + L-glutamine + ATP + H2O = L-glutaminyl-tRNA(Gln) + L-glutamate + ADP + phosphate + H(+). Functionally, allows the formation of correctly charged Gln-tRNA(Gln) through the transamidation of misacylated Glu-tRNA(Gln) in organisms which lack glutaminyl-tRNA synthetase. The reaction takes place in the presence of glutamine and ATP through an activated gamma-phospho-Glu-tRNA(Gln). The GatDE system is specific for glutamate and does not act on aspartate. In Thermoplasma volcanium (strain ATCC 51530 / DSM 4299 / JCM 9571 / NBRC 15438 / GSS1), this protein is Glutamyl-tRNA(Gln) amidotransferase subunit E.